We begin with the raw amino-acid sequence, 365 residues long: Galactoside alpha-(1,2)-fucosyltransferase 1 (365 aa).

At 1-8 (MWPLSHRH) the chain is on the cytoplasmic side. A helical; Signal-anchor for type II membrane protein membrane pass occupies residues 9 to 25 (LCLAFLLVCVLSAISFF). Over 26-365 (LHLYQDSIRH…LSPLWTLAEP (340 aa)) the chain is Lumenal. 3 N-linked (GlcNAc...) asparagine glycosylation sites follow: Asn65, Asn301, and Asn327.

Belongs to the glycosyltransferase 11 family.

It localises to the golgi apparatus. The protein resides in the golgi stack membrane. The enzyme catalyses a beta-D-galactosyl-(1-&gt;4)-N-acetyl-beta-D-glucosaminyl derivative + GDP-beta-L-fucose = an alpha-L-Fuc-(1-&gt;2)-beta-D-Gal-(1-&gt;4)-beta-D-GlcNAc derivative + GDP + H(+). It carries out the reaction a ganglioside GA1 + GDP-beta-L-fucose = a ganglioside Fuc-GA1 + GDP + H(+). It catalyses the reaction a beta-D-Gal-(1-&gt;3)-beta-D-GlcNAc-(1-&gt;3)-beta-D-Gal-(1-&gt;4)-beta-D-Glc-(1&lt;-&gt;1')-Cer(d18:1(4E)) + GDP-beta-L-fucose = alpha-L-fucosyl-(1-&gt;2)- beta-D-galactosyl-(1-&gt;3)-N-acetyl-beta-D-glucosaminyl-(1-&gt;3)-beta-D-galactosyl-(1-&gt;4)-beta-D-glucosyl-(1&lt;-&gt;1')-N-acylsphing-4-enine + GDP + H(+). The catalysed reaction is a neolactoside nLc4Cer(d18:1(4E)) + GDP-beta-L-fucose = a neolactoside IV(2)-alpha-Fuc-nLc4Cer(d18:1(4E)) + GDP + H(+). The enzyme catalyses a ganglioside GM1 + GDP-beta-L-fucose = a ganglioside Fuc-GM1 + GDP + H(+). It carries out the reaction beta-D-galactosyl-(1-&gt;3)-N-acetyl-D-galactosamine + GDP-beta-L-fucose = alpha-L-fucosyl-(1-&gt;2)-beta-D-galactosyl-(1-&gt;3)-N-acetyl-D-galactosamine + GDP + H(+). Its pathway is protein modification; protein glycosylation. Functionally, catalyzes the transfer of L-fucose, from a guanosine diphosphate-beta-L-fucose, to the terminal galactose residue of glycoconjugates through an alpha(1,2) linkage leading to H antigen synthesis that is an intermediate substrate in the synthesis of ABO blood group antigens. H antigen is essential for maturation of the glomerular layer of the main olfactory bulb, in cell migration and early cell-cell contacts during tumor associated angiogenesis. Preferentially fucosylates soluble lactose and to a lesser extent fucosylates glycolipids gangliosides GA1 and GM1a. The chain is Galactoside alpha-(1,2)-fucosyltransferase 1 from Leontopithecus chrysomelas (Golden-headed lion tamarin).